Consider the following 393-residue polypeptide: NAD(P)H-quinone oxidoreductase subunit H, chloroplastic (393 aa).

Belongs to the complex I 49 kDa subunit family. As to quaternary structure, NDH is composed of at least 16 different subunits, 5 of which are encoded in the nucleus.

The protein resides in the plastid. Its subcellular location is the chloroplast thylakoid membrane. The enzyme catalyses a plastoquinone + NADH + (n+1) H(+)(in) = a plastoquinol + NAD(+) + n H(+)(out). It catalyses the reaction a plastoquinone + NADPH + (n+1) H(+)(in) = a plastoquinol + NADP(+) + n H(+)(out). In terms of biological role, NDH shuttles electrons from NAD(P)H:plastoquinone, via FMN and iron-sulfur (Fe-S) centers, to quinones in the photosynthetic chain and possibly in a chloroplast respiratory chain. The immediate electron acceptor for the enzyme in this species is believed to be plastoquinone. Couples the redox reaction to proton translocation, and thus conserves the redox energy in a proton gradient. This is NAD(P)H-quinone oxidoreductase subunit H, chloroplastic from Gossypium barbadense (Sea Island cotton).